The sequence spans 535 residues: Serine/threonine-protein kinase C (535 aa).

The Protein kinase domain maps to 12-277 (YRIIETLGRG…AMAQTLQGNF (266 aa)). Residues 18 to 26 (LGRGGFGET) and lysine 43 each bind ATP. Aspartate 142 functions as the Proton acceptor in the catalytic mechanism. The disordered stretch occupies residues 371–535 (NNPPPAVEEP…GEKPIDPEQN (165 aa)). Positions 402–421 (SPIPTPATPSPEPTPSPSPS) are enriched in pro residues. Positions 422-435 (PETTSSPTEDTITP) are enriched in low complexity. Composition is skewed to pro residues over residues 446–464 (APIP…PQPS) and 472–498 (TPAP…PTPQ).

Belongs to the protein kinase superfamily. Ser/Thr protein kinase family.

It catalyses the reaction L-seryl-[protein] + ATP = O-phospho-L-seryl-[protein] + ADP + H(+). The catalysed reaction is L-threonyl-[protein] + ATP = O-phospho-L-threonyl-[protein] + ADP + H(+). The chain is Serine/threonine-protein kinase C (spkC) from Synechocystis sp. (strain ATCC 27184 / PCC 6803 / Kazusa).